The sequence spans 420 residues: Tyrosine--tRNA ligase 1 (420 aa).

Residue Tyr35 participates in L-tyrosine binding. Positions Pro40–His49 match the 'HIGH' region motif. Positions 172 and 176 each coordinate L-tyrosine. A 'KMSKS' region motif is present at residues Lys232–Thr236. An ATP-binding site is contributed by Lys235. The 65-residue stretch at Ile355–Leu419 folds into the S4 RNA-binding domain.

The protein belongs to the class-I aminoacyl-tRNA synthetase family. TyrS type 1 subfamily. As to quaternary structure, homodimer.

The protein resides in the cytoplasm. The enzyme catalyses tRNA(Tyr) + L-tyrosine + ATP = L-tyrosyl-tRNA(Tyr) + AMP + diphosphate + H(+). Catalyzes the attachment of tyrosine to tRNA(Tyr) in a two-step reaction: tyrosine is first activated by ATP to form Tyr-AMP and then transferred to the acceptor end of tRNA(Tyr). This is Tyrosine--tRNA ligase 1 from Pseudoalteromonas translucida (strain TAC 125).